The chain runs to 60 residues: UPF0337 protein asr1134 (60 aa).

Composition is skewed to basic and acidic residues over residues 1-18 (MSLE…EGKA) and 29-60 (PEDK…KKID). Positions 1 to 60 (MSLEDRAKATGKNIEGKAQEALGNVTGDPEDKAEGKAKQAESEVRHGVEDVKDNVKKKID) are disordered.

This sequence belongs to the UPF0337 (CsbD) family.

In Nostoc sp. (strain PCC 7120 / SAG 25.82 / UTEX 2576), this protein is UPF0337 protein asr1134.